Consider the following 177-residue polypeptide: ATP synthase subunit delta (177 aa).

This sequence belongs to the ATPase delta chain family. As to quaternary structure, F-type ATPases have 2 components, F(1) - the catalytic core - and F(0) - the membrane proton channel. F(1) has five subunits: alpha(3), beta(3), gamma(1), delta(1), epsilon(1). F(0) has three main subunits: a(1), b(2) and c(10-14). The alpha and beta chains form an alternating ring which encloses part of the gamma chain. F(1) is attached to F(0) by a central stalk formed by the gamma and epsilon chains, while a peripheral stalk is formed by the delta and b chains.

It localises to the cell membrane. Its function is as follows. F(1)F(0) ATP synthase produces ATP from ADP in the presence of a proton or sodium gradient. F-type ATPases consist of two structural domains, F(1) containing the extramembraneous catalytic core and F(0) containing the membrane proton channel, linked together by a central stalk and a peripheral stalk. During catalysis, ATP synthesis in the catalytic domain of F(1) is coupled via a rotary mechanism of the central stalk subunits to proton translocation. Functionally, this protein is part of the stalk that links CF(0) to CF(1). It either transmits conformational changes from CF(0) to CF(1) or is implicated in proton conduction. The protein is ATP synthase subunit delta of Streptococcus suis (strain 98HAH33).